Consider the following 796-residue polypeptide: High affinity nerve growth factor receptor (796 aa).

Positions 1–32 (MLRGGRRGQLGWHSWAAGPGSLLAWLILASAG) are cleaved as a signal peptide. Residues 33 to 423 (AAPCPDACCP…TPFGVSVAVG (391 aa)) lie on the Extracellular side of the membrane. Intrachain disulfides connect C36-C41 and C40-C50. N-linked (GlcNAc...) asparagine glycosylation is found at N67, N95, N121, N188, N202, N253, N262, N281, N318, N323, N338, N358, and N401. 2 LRR repeats span residues 90–113 (LGEL…AFHF) and 116–137 (RLSR…TVQG). One can recognise an LRRCT domain in the interval 148–193 (NPLHCSCALRWLQRWEEEGLGGVPEQKLQCHGQGPLAHMPNASCGV). The cysteines at positions 154 and 191 are disulfide-linked. 2 consecutive Ig-like C2-type domains span residues 194–283 (PTLK…VNVS) and 299–365 (WCIP…LAAN). C215 and C265 form a disulfide bridge. A disulfide bridge connects residues C300 and C345. A helical membrane pass occupies residues 424-439 (LAVFACLFLSTLLLVL). Over 440–796 (NKCGRRNKFG…APPVYLDVLG (357 aa)) the chain is Cytoplasmic. Positions 469–490 (MTLGGSSLSPTEGKGSGLQGHI) are interaction with SQSTM1. Y496 bears the Phosphotyrosine; by autocatalysis mark. The 272-residue stretch at 510–781 (IVLKWELGEG…HSIKDVHARL (272 aa)) folds into the Protein kinase domain. Position 516-524 (516-524 (LGEGAFGKV)) interacts with ATP. A DXXLL motif is present at residues 537-541 (DKMLV). ATP is bound at residue K544. A DXXLL motif is present at residues 607-611 (DAKLL). D650 serves as the catalytic Proton acceptor. Y676, Y680, Y681, and Y791 each carry phosphotyrosine; by autocatalysis.

Belongs to the protein kinase superfamily. Tyr protein kinase family. Insulin receptor subfamily. Exists in a dynamic equilibrium between monomeric (low affinity) and dimeric (high affinity) structures. Homodimerization is induced by binding of a NGF dimer. Interacts with SQSTM1; bridges NTRK1 to NGFR. Forms a ternary complex with NGFR and KIDINS220; this complex is affected by the expression levels of KIDINS220 and an increase in KIDINS220 expression leads to a decreased association of NGFR and NTRK1. Interacts with SH2D1A; regulates NTRK1. Interacts (phosphorylated upon activation by NGF) with SHC1; mediates SHC1 phosphorylation and activation. Interacts (phosphorylated upon activation by NGF) with PLCG1; mediates PLCG1 phosphorylation and activation. Interacts (phosphorylated) with SH2B1 and SH2B2. Interacts with GRB2. Interacts with PIK3R1. Interacts with FRS2. Interacts with SORT1; may regulate NTRK1 anterograde axonal transport. Interacts with RAB7A. Found in a complex, at least composed of KIDINS220, MAGI2, NTRK1 and RAPGEF2; the complex is mainly formed at late endosomes in a nerve growth factor (NGF)-dependent manner. Interacts with RAPGEF2; the interaction is strengthened after NGF stimulation. Interacts with PTPRS. Interacts with USP36; USP36 does not deubiquitinate NTRK1. Interacts with GGA3. Interacts with TSPAN1; this interaction promotes NTRK1 stability. Ligand-mediated autophosphorylation. Interaction with SQSTM1 is phosphotyrosine-dependent. Autophosphorylation at Tyr-496 mediates interaction and phosphorylation of SHC1. Post-translationally, N-glycosylated. Isoform TrkA-I and isoform TrkA-II are N-glycosylated. In terms of processing, ubiquitinated. Undergoes polyubiquitination upon activation; regulated by NGFR. Ubiquitination by NEDD4L leads to degradation. Ubiquitination regulates the internalization of the receptor. As to expression, isoform TrkA-I is found in most non-neuronal tissues. Isoform TrkA-II is primarily expressed in neuronal cells. TrkA-III is specifically expressed by pluripotent neural stem and neural crest progenitors.

The protein resides in the cell membrane. The protein localises to the early endosome membrane. It is found in the late endosome membrane. Its subcellular location is the recycling endosome membrane. It carries out the reaction L-tyrosyl-[protein] + ATP = O-phospho-L-tyrosyl-[protein] + ADP + H(+). Its activity is regulated as follows. The pro-survival signaling effect of NTRK1 in neurons requires its endocytosis into signaling early endosomes and its retrograde axonal transport. This is regulated by different proteins including CFL1, RAC1 and SORT1. NTF3 is unable to induce this signaling probably due to the lability of the NTF3-NTRK1 complex in endosomes. SH2D1A inhibits the autophosphorylation of the receptor, and alters the recruitment and activation of downstream effectors and signaling cascades. Regulated by NGFR. Receptor tyrosine kinase involved in the development and the maturation of the central and peripheral nervous systems through regulation of proliferation, differentiation and survival of sympathetic and nervous neurons. High affinity receptor for NGF which is its primary ligand. Can also bind and be activated by NTF3/neurotrophin-3. However, NTF3 only supports axonal extension through NTRK1 but has no effect on neuron survival. Upon dimeric NGF ligand-binding, undergoes homodimerization, autophosphorylation and activation. Recruits, phosphorylates and/or activates several downstream effectors including SHC1, FRS2, SH2B1, SH2B2 and PLCG1 that regulate distinct overlapping signaling cascades driving cell survival and differentiation. Through SHC1 and FRS2 activates a GRB2-Ras-MAPK cascade that regulates cell differentiation and survival. Through PLCG1 controls NF-Kappa-B activation and the transcription of genes involved in cell survival. Through SHC1 and SH2B1 controls a Ras-PI3 kinase-AKT1 signaling cascade that is also regulating survival. In absence of ligand and activation, may promote cell death, making the survival of neurons dependent on trophic factors. Functionally, resistant to NGF, it constitutively activates AKT1 and NF-kappa-B and is unable to activate the Ras-MAPK signaling cascade. Antagonizes the anti-proliferative NGF-NTRK1 signaling that promotes neuronal precursors differentiation. Isoform TrkA-III promotes angiogenesis and has oncogenic activity when overexpressed. The sequence is that of High affinity nerve growth factor receptor (NTRK1) from Homo sapiens (Human).